A 105-amino-acid polypeptide reads, in one-letter code: Large ribosomal subunit protein uL24 (105 aa).

This sequence belongs to the universal ribosomal protein uL24 family. As to quaternary structure, part of the 50S ribosomal subunit.

Functionally, one of two assembly initiator proteins, it binds directly to the 5'-end of the 23S rRNA, where it nucleates assembly of the 50S subunit. In terms of biological role, one of the proteins that surrounds the polypeptide exit tunnel on the outside of the subunit. The sequence is that of Large ribosomal subunit protein uL24 from Mycobacterium avium (strain 104).